A 361-amino-acid polypeptide reads, in one-letter code: Eukaryotic translation initiation factor 3 subunit F (361 aa).

Composition is skewed to low complexity over residues methionine 1–proline 11 and alanine 21–valine 42. A disordered region spans residues methionine 1 to valine 42. Residue alanine 2 is modified to N-acetylalanine. Position 50 is a phosphoserine; by CDK11; in vitro (serine 50). Over residues alanine 55–alanine 78 the composition is skewed to low complexity. Residues alanine 55–leucine 86 are disordered. The MPN domain maps to valine 96 to glycine 226. Position 242 is an N6-acetyllysine (lysine 242). Serine 262 carries the post-translational modification Phosphoserine.

Belongs to the eIF-3 subunit F family. As to quaternary structure, component of the eukaryotic translation initiation factor 3 (eIF-3) complex, which is composed of 13 subunits: EIF3A, EIF3B, EIF3C, EIF3D, EIF3E, EIF3F, EIF3G, EIF3H, EIF3I, EIF3J, EIF3K, EIF3L and EIF3M. The eIF-3 complex appears to include 3 stable modules: module A is composed of EIF3A, EIF3B, EIF3G and EIF3I; module B is composed of EIF3F, EIF3H, and EIF3M; and module C is composed of EIF3C, EIF3D, EIF3E, EIF3K and EIF3L. EIF3C of module C binds EIF3B of module A and EIF3H of module B, thereby linking the three modules. EIF3J is a labile subunit that binds to the eIF-3 complex via EIF3B. The eIF-3 complex interacts with RPS6KB1 under conditions of nutrient depletion. Mitogenic stimulation leads to binding and activation of a complex composed of MTOR and RPTOR, leading to phosphorylation and release of RPS6KB1 and binding of EIF4B to eIF-3. Interacts with RNF139; the interaction leads to protein translation inhibitions in a ubiquitination-dependent manner. Interacts with DTX1, the interaction is required for deubiquitinating activity towards NOTCH1. Phosphorylation is enhanced upon serum stimulation. Phosphorylated during apoptosis by caspase-processed CDK11.

Its subcellular location is the cytoplasm. The catalysed reaction is Thiol-dependent hydrolysis of ester, thioester, amide, peptide and isopeptide bonds formed by the C-terminal Gly of ubiquitin (a 76-residue protein attached to proteins as an intracellular targeting signal).. Functionally, component of the eukaryotic translation initiation factor 3 (eIF-3) complex, which is required for several steps in the initiation of protein synthesis. The eIF-3 complex associates with the 40S ribosome and facilitates the recruitment of eIF-1, eIF-1A, eIF-2:GTP:methionyl-tRNAi and eIF-5 to form the 43S pre-initiation complex (43S PIC). The eIF-3 complex stimulates mRNA recruitment to the 43S PIC and scanning of the mRNA for AUG recognition. The eIF-3 complex is also required for disassembly and recycling of post-termination ribosomal complexes and subsequently prevents premature joining of the 40S and 60S ribosomal subunits prior to initiation. The eIF-3 complex specifically targets and initiates translation of a subset of mRNAs involved in cell proliferation, including cell cycling, differentiation and apoptosis, and uses different modes of RNA stem-loop binding to exert either translational activation or repression. Deubiquitinates activated NOTCH1, promoting its nuclear import, thereby acting as a positive regulator of Notch signaling. The polypeptide is Eukaryotic translation initiation factor 3 subunit F (Macaca fascicularis (Crab-eating macaque)).